The primary structure comprises 177 residues: Inorganic pyrophosphatase (177 aa).

Residues Lys30, Arg44, and Tyr56 each coordinate substrate. Positions 66, 71, and 103 each coordinate Mg(2+). Position 142 (Tyr142) interacts with substrate.

Belongs to the PPase family. As to quaternary structure, homohexamer. The cofactor is Mg(2+).

It is found in the cytoplasm. The enzyme catalyses diphosphate + H2O = 2 phosphate + H(+). In terms of biological role, catalyzes the hydrolysis of inorganic pyrophosphate (PPi) forming two phosphate ions. The polypeptide is Inorganic pyrophosphatase (Caulobacter vibrioides (strain ATCC 19089 / CIP 103742 / CB 15) (Caulobacter crescentus)).